The sequence spans 246 residues: uncharacterized protein (246 aa).

This sequence belongs to the IIV-6 170L family.

This is an uncharacterized protein from Acheta domesticus (House cricket).